A 502-amino-acid chain; its full sequence is Lysine--tRNA ligase (502 aa).

Residues Glu398 and Glu405 each contribute to the Mg(2+) site.

Belongs to the class-II aminoacyl-tRNA synthetase family. Homodimer. The cofactor is Mg(2+).

Its subcellular location is the cytoplasm. The catalysed reaction is tRNA(Lys) + L-lysine + ATP = L-lysyl-tRNA(Lys) + AMP + diphosphate. This is Lysine--tRNA ligase from Thermotoga sp. (strain RQ2).